The following is a 533-amino-acid chain: Acid-sensing ion channel 3 (533 aa).

Residues 1–19 lie on the Cytoplasmic side of the membrane; that stretch reads MKPRSGLEEAQRRQASDIR. A helical membrane pass occupies residues 20–40; that stretch reads VFASSCTMHGLGHIFGPGGLT. Phosphothreonine; by PKC is present on Thr-40. The Extracellular segment spans residues 41-435; the sequence is LRRGLWATAV…EQKAAYEVSE (395 aa). Disulfide bonds link Cys-93/Cys-187, Cys-165/Cys-172, Cys-283/Cys-372, Cys-317/Cys-368, Cys-321/Cys-366, Cys-330/Cys-352, and Cys-332/Cys-344. Asn-176 carries N-linked (GlcNAc...) asparagine glycosylation. The interval 286 to 310 is disordered; it reads ASLDPDDFDPEPSDPLGSPRPRPSP. A glycan (N-linked (GlcNAc...) asparagine) is linked at Asn-400. A helical membrane pass occupies residues 436-456; that stretch reads LLGDIGGQMGLFIGASLLTIL. The GAS motif; ion selectivity filter motif lies at 449–451; the sequence is GAS. Residues 457 to 533 are Cytoplasmic-facing; the sequence is EILDYLCEVF…HRTCYLVTRL (77 aa). The residue at position 523 (Ser-523) is a Phosphoserine; by PKC. Residues 530–533 carry the PDZ-binding motif; it reads VTRL.

It belongs to the amiloride-sensitive sodium channel (TC 1.A.6) family. ASIC3 subfamily. Can form homotrimeric channels. Heterotrimer; forms functional heterotrimers producing channel with different properties. Forms heterotrimers with ASIC2; gives rise to a biphasic current with a sustained current which discriminates poorly between Na(+) and K(+). Interacts with STOM; inhibits ASIC3 acid-evoked current. Interacts with LIN7B (via PDZ domain); increases ASIC3 expression at the plasma membrane. Interacts with MAGI1 (via PDZ domain); probably regulates ASIC3. Interacts with GOPC (via PDZ domain); probably regulates ASIC3. Interacts with DLG4 (via PDZ domain); reduces ASIC3 expression at the plasma membrane. In terms of processing, could be phosphorylated by PKC, promoting activation of ASIC2/ASIC3 heterotrimers. In terms of tissue distribution, expressed in sciatic nerve and dorsal root ganglion (at protein level). Expressed in sensory neurons of dorsal root ganglion. Expressed in Golgi interneurons in the granular layer. Also found in superior cervical ganglia, spinal cord and brain stem.

Its subcellular location is the cell membrane. The protein localises to the cytoplasm. The catalysed reaction is Na(+)(in) = Na(+)(out). It carries out the reaction K(+)(in) = K(+)(out). The enzyme catalyses Ca(2+)(in) = Ca(2+)(out). Inhibited by the diuretic drug amiloride. Inhibited by gadolinium ions. Inhibited by extracellular Ca(2+). Activated by lactate. Salicylic acid, diclofenac and aspirin inhibit the sustained current component. Activated by the vertebrate neuropeptides NPFF and NPSF, and the related FMRFamide. Specifically and reversibly inhibited by the a sea anemone toxin APETx2. ASIC3-containing channels are potentiated by the cono-RFamide CNF-Tx1.1, and probably CNF-Tx1.2 and CNF-Tx1.3 (AC P0DL71). Functionally, forms pH-gated heterotrimeric sodium channels that act as postsynaptic excitatory receptors in the nervous system. Upon extracellular acidification, these channels generate a biphasic current with a fast inactivating and a slow sustained phase. ASIC3 is more sensitive to protons and gates between closed, open, and desensitized states faster than other ASICs. Displays high selectivity for sodium ions but can also permit the permeation of other cations. As a neuronal acid sensor, probably contributes to mechanoreception, acid nociception, and heat nociception. By forming heterotrimeric channels with ASIC2, generates a biphasic current with a fast inactivating and a slow sustained phase, which in sensory neurons is proposed to mediate the pain induced by acidosis that occurs in ischemic, damaged or inflamed tissues. This is Acid-sensing ion channel 3 from Rattus norvegicus (Rat).